The sequence spans 493 residues: MEKYENLGLVGEGSYGMVMKCRNKDTGRIVAIKKFLESDDDKMVKKIAMREIKLLKQLRHENLVNLLEVCKKKKRWYLVFEFVDHTILDDLELFPNGLDYQVVQKYLFQIINGIGFCHSHNIIHRDIKPENILVSKSGVVKLCDFGFARTLAAPGEVYTDYVATRWYRAPELLVGDVKYGKAVDVWAIGCLVTEMFMGEPLFPGDSDIDQLYHIMMCLGNLIPRHQELFYKNPVFAGVRLPEIKEREPLERRYPKLSEVVIDLAKKCLHIDPDKRPFCAELLHHDFFQMDGFAERFSQELQLKVQKDARNVSLSKKSQNRKKEKEKDDSLGEERKTLVVQDTNADPKIKDCKLFKIKGSKIDGEKAEKGSRASNASCLHDSRTSHNKIVPSTSLKDCSNVSVDHTRNPSVAIPPLTHNLSAVAPGINSGMGTATIPIQGHRVDEKTKKCSIPFVKPNRHSPSGIYNINVTTLVSGPPLSDDSGADLPQMEHQH.

The 284-residue stretch at 4 to 287 (YENLGLVGEG…CAELLHHDFF (284 aa)) folds into the Protein kinase domain. Residues 10–18 (VGEGSYGMV) and Lys33 each bind ATP. The [NKR]KIAxRE motif lies at 45–51 (KKIAMRE). Asp126 (proton acceptor) is an active-site residue. 2 disordered regions span residues 311–338 (VSLSKKSQNRKKEKEKDDSLGEERKTLV) and 363–384 (GEKAEKGSRASNASCLHDSRTS). Residues 320-336 (RKKEKEKDDSLGEERKT) show a composition bias toward basic and acidic residues.

The protein belongs to the protein kinase superfamily. CMGC Ser/Thr protein kinase family. CDC2/CDKX subfamily.

The protein resides in the cytoplasm. Its subcellular location is the nucleus. It carries out the reaction L-seryl-[protein] + ATP = O-phospho-L-seryl-[protein] + ADP + H(+). The enzyme catalyses L-threonyl-[protein] + ATP = O-phospho-L-threonyl-[protein] + ADP + H(+). The polypeptide is Cyclin-dependent kinase-like 2 (Pongo abelii (Sumatran orangutan)).